A 1706-amino-acid polypeptide reads, in one-letter code: 5'-3' exoribonuclease 1 (1706 aa).

Position 1348 is a phosphoserine (Ser1348). The tract at residues 1619 to 1706 (ENKEAQSSQA…VNFGVSKPSE (88 aa)) is disordered. Positions 1623-1642 (AQSSQATPVQTSQPDSSNIV) are enriched in polar residues. Ser1645 is subject to Phosphoserine. The segment covering 1647–1657 (RESSSASLKSS) has biased composition (low complexity). Polar residues predominate over residues 1658 to 1676 (PIAQPASSFQVETASQGHS). The segment covering 1677-1694 (ISHHKSTPISSSRRKSRK) has biased composition (basic residues).

It belongs to the 5'-3' exonuclease family. As to quaternary structure, found in a mRNP complex with UPF1, UPF2, UPF3B and XRN1. Associates with alpha and beta tubulins. Interacts with DIS3L2. Interacts with ZC3HAV1 in an RNA-dependent manner. Interacts with ZFP36L1. Interacts with TRIM71 (via NHL repeats) in an RNA-dependent manner. Interacts with YTHDC2 (via ANK repeats). Interacts with DHX34; the interaction is RNA-independent. As to expression, expressed in heart, brain, pancreas, spleen, testis, osteogenic sarcoma (OGS) biopsy and primary cell lines.

It localises to the cytoplasm. Major 5'-3' exoribonuclease involved in mRNA decay. Required for the 5'-3'-processing of the G4 tetraplex-containing DNA and RNA substrates. The kinetic of hydrolysis is faster for G4 RNA tetraplex than for G4 DNA tetraplex and monomeric RNA tetraplex. Binds to RNA and DNA. Plays a role in replication-dependent histone mRNA degradation. May act as a tumor suppressor protein in osteogenic sarcoma (OGS). This is 5'-3' exoribonuclease 1 from Homo sapiens (Human).